A 98-amino-acid chain; its full sequence is NADH-ubiquinone oxidoreductase chain 4L (98 aa).

A run of 3 helical transmembrane segments spans residues 1-21, 28-48, and 59-79; these read MMPI…GALV, STLL…ALLI, and APLI…ALLV.

It belongs to the complex I subunit 4L family. Core subunit of respiratory chain NADH dehydrogenase (Complex I) which is composed of 45 different subunits.

It localises to the mitochondrion inner membrane. It carries out the reaction a ubiquinone + NADH + 5 H(+)(in) = a ubiquinol + NAD(+) + 4 H(+)(out). Functionally, core subunit of the mitochondrial membrane respiratory chain NADH dehydrogenase (Complex I) which catalyzes electron transfer from NADH through the respiratory chain, using ubiquinone as an electron acceptor. Part of the enzyme membrane arm which is embedded in the lipid bilayer and involved in proton translocation. This is NADH-ubiquinone oxidoreductase chain 4L (MT-ND4L) from Distoechurus pennatus (Feather-tailed possum).